The following is a 1317-amino-acid chain: ABC transporter C family member 14 (1317 aa).

Positions 119–404 constitute an ABC transmembrane type-1 1 domain; the sequence is NKYALISNIF…LPEDIYKAIG (286 aa). A run of 5 helical transmembrane segments spans residues 127-147, 156-176, 249-269, 341-361, and 375-395; these read IFITIFIFLSPICLKFLINYI, SILKGILLCCLLCISILGQSI, ILILLGLLCYVVGPSGLVGFG, VLFWIFDHMMIETNATLVLVS, and LDVTFTAMTIFANLKLPLIYL. The disordered stretch occupies residues 426-451; that stretch reads ENNQNINFNNNNNNNNNNKNNNNNDD. A compositionally biased stretch (low complexity) spans 427–449; that stretch reads NNQNINFNNNNNNNNNNKNNNNN. Residues 490–710 form the ABC transporter 1 domain; sequence ENEENIKINE…ISDKNDPNLI (221 aa). 522–529 is a binding site for ATP; sequence GVVGSGKT. 5 helical membrane passes run 734–754, 778–798, 871–891, 969–989, and 992–1012; these read YFSYGTSGVTLFITISLFFIG, DSFYIGYYLLIIGIFVSLLMI, LISIVFIIPIIIIPLTLLFII, LEVMGCIMVFFTSLAAALFTS, and GLAALSVTTALSLNGYLSWGV. The 284-residue stretch at 744-1027 folds into the ABC transmembrane type-1 2 domain; sequence LFITISLFFI…LEVKMNSFQR (284 aa). The ABC transporter 2 domain maps to 1071 to 1306; it reads IEFKNVEIKY…PNSKFNKLIK (236 aa). 1105–1112 lines the ATP pocket; the sequence is GRTGAGKT.

The protein belongs to the ABC transporter superfamily. ABCC family. Conjugate transporter (TC 3.A.1.208) subfamily.

It is found in the membrane. In Dictyostelium discoideum (Social amoeba), this protein is ABC transporter C family member 14 (abcC14).